Consider the following 389-residue polypeptide: Succinate--CoA ligase [ADP-forming] subunit beta (389 aa).

Residues 9–244 form the ATP-grasp domain; it reads KQLFADYGLP…ETQEDPREVE (236 aa). ATP-binding positions include Lys46, 53 to 55, Glu99, Gly102, and Glu107; that span reads GRG. The Mg(2+) site is built by Asn199 and Asp213. Residues Asn264 and 321–323 contribute to the substrate site; that span reads GIV.

The protein belongs to the succinate/malate CoA ligase beta subunit family. As to quaternary structure, heterotetramer of two alpha and two beta subunits. Mg(2+) serves as cofactor.

It catalyses the reaction succinate + ATP + CoA = succinyl-CoA + ADP + phosphate. It carries out the reaction GTP + succinate + CoA = succinyl-CoA + GDP + phosphate. It functions in the pathway carbohydrate metabolism; tricarboxylic acid cycle; succinate from succinyl-CoA (ligase route): step 1/1. Succinyl-CoA synthetase functions in the citric acid cycle (TCA), coupling the hydrolysis of succinyl-CoA to the synthesis of either ATP or GTP and thus represents the only step of substrate-level phosphorylation in the TCA. The beta subunit provides nucleotide specificity of the enzyme and binds the substrate succinate, while the binding sites for coenzyme A and phosphate are found in the alpha subunit. This Tolumonas auensis (strain DSM 9187 / NBRC 110442 / TA 4) protein is Succinate--CoA ligase [ADP-forming] subunit beta.